A 452-amino-acid polypeptide reads, in one-letter code: Lamina-associated polypeptide 2, isoform beta (452 aa).

The interval 1–409 (MPEFLEDPSV…KSEKTKKGRS (409 aa)) is nucleoplasmic. Positions 5-48 (LEDPSVLTKDKLKSELVANNVTLPAGEQRKDVYVQLYLQHLTAR) constitute an LEM-like domain. Disordered regions lie at residues 48-113 (RNRP…DVTE) and 149-264 (REQG…VEPS). The segment at 49–107 (NRPPLAAGANSKGPPDFSSDEEREPTPVLGSGASVGRGRGAVGRKATKKTDKPRPEDKD) is linker. Phosphoserine occurs at positions 66 and 67. Phosphothreonine is present on Thr74. Ser82 carries the phosphoserine modification. Omega-N-methylarginine occurs at positions 85 and 87. The segment covering 96–105 (KKTDKPRPED) has biased composition (basic and acidic residues). The LEM domain occupies 108–152 (DLDVTELSNEELLEQLVRYGVNPGPIVGTTRKLYEKKLLKLREQG). The tract at residues 137-242 (TRKLYEKKLL…TSGSSKGGPL (106 aa)) is NAKAP95-binding N. A compositionally biased stretch (polar residues) spans 154–177 (ESRSSTPLPTVSSSAENTRQNGSN). Phosphoserine occurs at positions 155 and 158. Thr159 is subject to Phosphothreonine. Ser165, Ser167, Ser176, Ser179, and Ser183 each carry phosphoserine. The span at 178–202 (DSDRYSDNDEDSKIELKLEKREPLK) shows a compositional bias: basic and acidic residues. Residue Lys206 is modified to N6-acetyllysine. The binds lamins B stretch occupies residues 298-370 (TGNFKHASSI…SCRRPIKGAA (73 aa)). Positions 299–373 (GNFKHASSIL…RPIKGAAGRP (75 aa)) are NAKAP95-binding C. Phosphoserine is present on residues Ser305, Ser306, and Ser361. Position 388 is an N6-acetyllysine (Lys388). The chain crosses the membrane as a helical; Signal-anchor for type II membrane protein span at residues 410 to 430 (VPMWIKMLLFALVAGFLFLVY). Residues 431-452 (QAMETNQGNPFTNFLQDTKISN) lie on the Lumenal side of the membrane.

It belongs to the LEM family. In terms of assembly, interacts with LMNB1, LMNB2, BANF1, AKAP8L, GMCL and chromosomes. Mitosis-specific phosphorylation specifically abolishes its binding to lamin B and chromosomes.

Its subcellular location is the nucleus inner membrane. The protein localises to the chromosome. Binds directly to lamin B1 and chromosomes in a mitotic phosphorylation-regulated manner. May play an important role in nuclear envelope reassembly at the end of mitosis and/or anchoring of the nuclear lamina and interphase chromosomes to the nuclear envelope. This is Lamina-associated polypeptide 2, isoform beta (Tmpo) from Rattus norvegicus (Rat).